The chain runs to 245 residues: 4-hydroxy-tetrahydrodipicolinate reductase (245 aa).

Residues 7 to 12 (GAKGKV), 75 to 77 (GTT), and 102 to 105 (APNF) each bind NAD(+). H132 functions as the Proton donor/acceptor in the catalytic mechanism. A (S)-2,3,4,5-tetrahydrodipicolinate-binding site is contributed by H133. K136 (proton donor) is an active-site residue. A (S)-2,3,4,5-tetrahydrodipicolinate-binding site is contributed by 142–143 (GT).

It belongs to the DapB family.

It is found in the cytoplasm. It catalyses the reaction (S)-2,3,4,5-tetrahydrodipicolinate + NAD(+) + H2O = (2S,4S)-4-hydroxy-2,3,4,5-tetrahydrodipicolinate + NADH + H(+). The catalysed reaction is (S)-2,3,4,5-tetrahydrodipicolinate + NADP(+) + H2O = (2S,4S)-4-hydroxy-2,3,4,5-tetrahydrodipicolinate + NADPH + H(+). The protein operates within amino-acid biosynthesis; L-lysine biosynthesis via DAP pathway; (S)-tetrahydrodipicolinate from L-aspartate: step 4/4. Functionally, catalyzes the conversion of 4-hydroxy-tetrahydrodipicolinate (HTPA) to tetrahydrodipicolinate. This is 4-hydroxy-tetrahydrodipicolinate reductase from Mycobacterium bovis (strain BCG / Pasteur 1173P2).